A 404-amino-acid chain; its full sequence is S-adenosylmethionine synthase (404 aa).

139-144 (GKGSSD) contacts ATP.

It belongs to the AdoMet synthase 2 family. Mg(2+) serves as cofactor.

The catalysed reaction is L-methionine + ATP + H2O = S-adenosyl-L-methionine + phosphate + diphosphate. It participates in amino-acid biosynthesis; S-adenosyl-L-methionine biosynthesis; S-adenosyl-L-methionine from L-methionine: step 1/1. Functionally, catalyzes the formation of S-adenosylmethionine from methionine and ATP. The protein is S-adenosylmethionine synthase of Saccharolobus solfataricus (strain ATCC 35092 / DSM 1617 / JCM 11322 / P2) (Sulfolobus solfataricus).